The sequence spans 310 residues: tRNA-cytidine(32) 2-sulfurtransferase (310 aa).

Residues Ser48 to Ser53 carry the PP-loop motif motif. Residues Cys123, Cys126, and Cys214 each coordinate [4Fe-4S] cluster.

This sequence belongs to the TtcA family. Homodimer. The cofactor is Mg(2+). It depends on [4Fe-4S] cluster as a cofactor.

It is found in the cytoplasm. The catalysed reaction is cytidine(32) in tRNA + S-sulfanyl-L-cysteinyl-[cysteine desulfurase] + AH2 + ATP = 2-thiocytidine(32) in tRNA + L-cysteinyl-[cysteine desulfurase] + A + AMP + diphosphate + H(+). It functions in the pathway tRNA modification. Its function is as follows. Catalyzes the ATP-dependent 2-thiolation of cytidine in position 32 of tRNA, to form 2-thiocytidine (s(2)C32). The sulfur atoms are provided by the cysteine/cysteine desulfurase (IscS) system. The sequence is that of tRNA-cytidine(32) 2-sulfurtransferase from Vibrio vulnificus (strain YJ016).